The sequence spans 82 residues: Small ribosomal subunit protein bS18 (82 aa).

Residues 1–20 (MSETSSAPVRRPFHRRRKTC) form a disordered region.

It belongs to the bacterial ribosomal protein bS18 family. Part of the 30S ribosomal subunit. Forms a tight heterodimer with protein bS6.

Its function is as follows. Binds as a heterodimer with protein bS6 to the central domain of the 16S rRNA, where it helps stabilize the platform of the 30S subunit. This Rhizobium johnstonii (strain DSM 114642 / LMG 32736 / 3841) (Rhizobium leguminosarum bv. viciae) protein is Small ribosomal subunit protein bS18.